The following is a 96-amino-acid chain: Carboxysome shell protein CsoS1A (96 aa).

In terms of domain architecture, BMC spans 7 to 92 (ALGMIETRGL…PHKEVEPVLT (86 aa)).

Belongs to the bacterial microcompartments protein family. CsoS1 subfamily. In terms of assembly, homohexamer with a small central pore. Forms a CsoS2-CsoS1-RuBisCO complex.

It is found in the carboxysome. One of shell proteins of the carboxysome, a polyhedral inclusion where RuBisCO (ribulose bisphosphate carboxylase, ccbL-ccbS) is sequestered. Assembles into hexamers which make sheets that form the facets of the polyhedral carboxysome. The shell probably limits the diffusion of CO(2) into and out of the carboxysome. This chain is Carboxysome shell protein CsoS1A, found in Hydrogenovibrio crunogenus (strain DSM 25203 / XCL-2) (Thiomicrospira crunogena).